Reading from the N-terminus, the 224-residue chain is Cytosolic-abundant heat soluble protein 77580 (224 aa).

Positions 1-13 (MSNYQQESSYQYS) are enriched in low complexity. The tract at residues 1 to 38 (MSNYQQESSYQYSDRSNNGQQQEQQEKKEVEHSSYTHT) is disordered. The span at 24–38 (QQEKKEVEHSSYTHT) shows a compositional bias: basic and acidic residues. Residues 83 to 191 (VIDTEAETEE…KRVLERSKFH (109 aa)) are a coiled coil. 2 CAHS motif regions span residues 122-140 (YRKQ…LEKQ) and 159-177 (QKRQ…LERE). Residues 200–215 (AAAGSTHSGSSSVAVS) are compositionally biased toward low complexity. The interval 200-224 (AAAGSTHSGSSSVAVSESEKFQTNN) is disordered.

The protein belongs to the Cytosolic-abundant heat soluble protein (CAHS) family.

It localises to the cytoplasm. Its function is as follows. CAHS proteins are cytosolic heat soluble proteins that seem to contribute to the anhydrobiosis in tardigrades, but their specific mechanisms are yet to be identified. It is possible that protection during anhydrobiosis might occur via the stabilization of vitrifying small molecules such as sugars, but not via the direct glass transition of CAHS proteins themselves. The chain is Cytosolic-abundant heat soluble protein 77580 from Hypsibius exemplaris (Freshwater tardigrade).